An 878-amino-acid polypeptide reads, in one-letter code: Phosphoenolpyruvate carboxylase (878 aa).

Catalysis depends on residues H138 and K545.

The protein belongs to the PEPCase type 1 family. It depends on Mg(2+) as a cofactor.

It carries out the reaction oxaloacetate + phosphate = phosphoenolpyruvate + hydrogencarbonate. In terms of biological role, forms oxaloacetate, a four-carbon dicarboxylic acid source for the tricarboxylic acid cycle. In Shewanella halifaxensis (strain HAW-EB4), this protein is Phosphoenolpyruvate carboxylase.